A 185-amino-acid chain; its full sequence is Prenylated Rab acceptor protein 1 (185 aa).

The Cytoplasmic portion of the chain corresponds to 1–78; it reads MAAQKDQQKD…RNVEYYQSNY (78 aa). The required for interaction with prenylated RAB3A and VAMP2 stretch occupies residues 30 to 54; the sequence is AGREWLERRRATIRPWGTFVDQQRF. A run of 2 helical transmembrane segments spans residues 79–94 and 95–112; these read VFVFLGLILYCVVTSP and MLLVALAVFFGACYILYL. At 113–131 the chain is on the cytoplasmic side; that stretch reads RTLQSKLVLFGREVSPAHQ. Transmembrane regions (helical) follow at residues 132–148 and 149–165; these read YALAGGVSFPFFWLAGA and GSAVFWVLGATLVLIGS. A required for interaction with GDI1 region spans residues 165–185; sequence SHAAFHQIEPADGEELQMEPV. The Cytoplasmic segment spans residues 166–185; it reads HAAFHQIEPADGEELQMEPV. Residues 175–185 form a required for interaction with prenylated RAB3A and VAMP2 region; sequence ADGEELQMEPV. The interval 175-185 is homodimerization; that stretch reads ADGEELQMEPV.

This sequence belongs to the PRA1 family. In terms of assembly, homodimers. Interacts specifically with both prenylated Rab proteins (including RAB3A and RAB1), and VAMP2 (synaptobrevin-2), in an exclusive way. Interacts with NDRG1. Interacts with free GDI1 in the absence of Rab proteins. Also interacts with PCLO. In terms of tissue distribution, ubiquitous.

Its subcellular location is the cell membrane. It is found in the cytoplasm. The protein resides in the golgi apparatus. The protein localises to the cytoplasmic vesicle. It localises to the secretory vesicle. Its subcellular location is the synaptic vesicle. Functionally, general Rab protein regulator required for vesicle formation from the Golgi complex. May control vesicle docking and fusion by mediating the action of Rab GTPases to the SNARE complexes. In addition it inhibits the removal of Rab GTPases from the membrane by GDI1. This chain is Prenylated Rab acceptor protein 1 (Rabac1), found in Rattus norvegicus (Rat).